The following is a 217-amino-acid chain: Small ribosomal subunit protein uS3 (217 aa).

The KH type-2 domain occupies 38-106 (IRKFVQKELA…QVHINIIEIK (69 aa)).

It belongs to the universal ribosomal protein uS3 family. Part of the 30S ribosomal subunit. Forms a tight complex with proteins S10 and S14.

Its function is as follows. Binds the lower part of the 30S subunit head. Binds mRNA in the 70S ribosome, positioning it for translation. This is Small ribosomal subunit protein uS3 from Streptococcus sanguinis (strain SK36).